A 398-amino-acid polypeptide reads, in one-letter code: Phosphoglycerate kinase (398 aa).

Substrate-binding positions include 23-25, Arg-38, 61-64, Arg-122, and Arg-155; these read DFN and HMGK. ATP is bound by residues Lys-206, Gly-297, Glu-328, and 354-357; that span reads GGDS.

This sequence belongs to the phosphoglycerate kinase family. In terms of assembly, monomer.

Its subcellular location is the cytoplasm. The enzyme catalyses (2R)-3-phosphoglycerate + ATP = (2R)-3-phospho-glyceroyl phosphate + ADP. Its pathway is carbohydrate degradation; glycolysis; pyruvate from D-glyceraldehyde 3-phosphate: step 2/5. This chain is Phosphoglycerate kinase, found in Clostridium botulinum (strain Kyoto / Type A2).